The sequence spans 670 residues: MIASCLCYLLLPATRLFRALSDAFFTCRKNVLLANSSSPQVEGDFAMAPRGPEQEECEGLLQQWREEGLSQVLSTASEGPLIDKGLAQSSLALLMDNPGEENAASEDRWSSRQLSDLRAAENLDEPFPEMLGEEPLLEVEGVEGSMWAAIPMQSEPQYADCAALPVGALATEQWEEDPAVLAWSIAPEPVPQEEASIWPFEGLGQLQPPAVEIPYHEILWREWEDFSTQPDAQGLKAGDGPQFQFTLMSYNILAQDLMQQSSELYLHCHPDILNWNYRFVNLMQEFQHWDPDILCLQEVQEDHYWEQLEPSLRMMGFTCFYKRRTGCKTDGCAVCYKPTRFRLLCASPVEYFRPGLELLNRDNVGLVLLLQPLVPEGLGQVSVAPLCVANTHILYNPRRGDVKLAQMAILLAEVDKVARLSDGSHCPIILCGDLNSVPDSPLYNFIRDGELQYHGMPAWKVSGQEDFSHQLYQRKLQAPLWPSSLGITDCCQYVTSCHPKRSERRKYGRDFLLRFRFCSIACQRPVGLVLMEGVTDTKPERPAGWAESVLEEDASELEPAFSRTVGTIQHCLHLTSVYTHFLPQRGRPEVTTMPLGLGMTVDYIFFSAESCENGNRTDHRLYRDGTLKLLGRLSLLSEEILWAANGLPNPFCSSDHLCLLASFGMEVTAP.

2 positions are modified to phosphoserine: Ser77 and Ser105.

It belongs to the CCR4/nocturin family.

The polypeptide is Protein angel homolog 1 (ANGEL1) (Homo sapiens (Human)).